Reading from the N-terminus, the 364-residue chain is Anionic peroxidase (364 aa).

The N-terminal stretch at 1–20 (MASFMKQLSLVLSFIALALA) is a signal peptide. A propeptide spanning residues 21-66 (GCAVYQNTQTAMKDQLKVTPTWLDNTLKSTNLLSLGLGKPSGGKLG) is cleaved from the precursor. H99 serves as the catalytic Proton acceptor. Ca(2+) is bound by residues D100, V103, G105, and D107. C101 and C106 are disulfide-bonded. N113, N188, N202, and N216 each carry an N-linked (GlcNAc...) asparagine glycan. Disulfide bonds link C155/C343 and C234/C255. Residue H227 participates in heme b binding. Residue T228 coordinates Ca(2+). N-linked (GlcNAc...) asparagine glycosylation is found at N254 and N260. Ca(2+) contacts are provided by D268, T270, and D275. N299 carries an N-linked (GlcNAc...) asparagine glycan.

The protein belongs to the peroxidase family. Classical plant (class III) peroxidase subfamily. Ca(2+) is required as a cofactor. It depends on heme b as a cofactor. As to expression, highly expressed in suspension cultured cells and calli. Weak expression also found in the stems of intact plants. No expression in leaf, tuberous root and non-tuberous root.

It is found in the secreted. The catalysed reaction is 2 a phenolic donor + H2O2 = 2 a phenolic radical donor + 2 H2O. Functionally, removal of H(2)O(2), oxidation of toxic reductants, biosynthesis and degradation of lignin, suberization, auxin catabolism, response to environmental stresses such as wounding, pathogen attack and oxidative stress. These functions might be dependent on each isozyme/isoform in each plant tissue. May contribute to protection against cold-induced oxidative stress. The sequence is that of Anionic peroxidase from Ipomoea batatas (Sweet potato).